A 561-amino-acid chain; its full sequence is DNA ligase (561 aa).

E249 is a binding site for ATP. K251 acts as the N6-AMP-lysine intermediate in catalysis. 6 residues coordinate ATP: R256, R271, E301, F340, R417, and K423.

Belongs to the ATP-dependent DNA ligase family. The cofactor is Mg(2+).

The catalysed reaction is ATP + (deoxyribonucleotide)n-3'-hydroxyl + 5'-phospho-(deoxyribonucleotide)m = (deoxyribonucleotide)n+m + AMP + diphosphate.. DNA ligase that seals nicks in double-stranded DNA during DNA replication, DNA recombination and DNA repair. In Methanothermobacter thermautotrophicus (strain ATCC 29096 / DSM 1053 / JCM 10044 / NBRC 100330 / Delta H) (Methanobacterium thermoautotrophicum), this protein is DNA ligase.